The sequence spans 479 residues: Ribulose bisphosphate carboxylase large chain (479 aa).

Positions 1–2 (MS) are excised as a propeptide. Substrate contacts are provided by asparagine 123 and threonine 173. Lysine 175 (proton acceptor) is an active-site residue. Substrate is bound at residue lysine 177. Positions 201, 203, and 204 each coordinate Mg(2+). N6-carboxylysine is present on lysine 201. A Phosphoserine modification is found at serine 208. Catalysis depends on histidine 294, which acts as the Proton acceptor. Substrate contacts are provided by arginine 295 and histidine 327. Threonine 330 carries the phosphothreonine modification. Serine 379 contributes to the substrate binding site.

It belongs to the RuBisCO large chain family. Type I subfamily. Heterohexadecamer of 8 large chains and 8 small chains; disulfide-linked. The disulfide link is formed within the large subunit homodimers. Mg(2+) is required as a cofactor. In terms of processing, the disulfide bond which can form in the large chain dimeric partners within the hexadecamer appears to be associated with oxidative stress and protein turnover.

Its subcellular location is the plastid. The protein localises to the chloroplast. The enzyme catalyses 2 (2R)-3-phosphoglycerate + 2 H(+) = D-ribulose 1,5-bisphosphate + CO2 + H2O. The catalysed reaction is D-ribulose 1,5-bisphosphate + O2 = 2-phosphoglycolate + (2R)-3-phosphoglycerate + 2 H(+). Its function is as follows. RuBisCO catalyzes two reactions: the carboxylation of D-ribulose 1,5-bisphosphate, the primary event in carbon dioxide fixation, as well as the oxidative fragmentation of the pentose substrate in the photorespiration process. Both reactions occur simultaneously and in competition at the same active site. The chain is Ribulose bisphosphate carboxylase large chain from Arabis hirsuta (Hairy rock-cress).